Reading from the N-terminus, the 168-residue chain is Transcription antitermination protein NusB (168 aa).

The protein belongs to the NusB family.

Its function is as follows. Involved in transcription antitermination. Required for transcription of ribosomal RNA (rRNA) genes. Binds specifically to the boxA antiterminator sequence of the ribosomal RNA (rrn) operons. The sequence is that of Transcription antitermination protein NusB from Chlamydia trachomatis serovar A (strain ATCC VR-571B / DSM 19440 / HAR-13).